A 529-amino-acid polypeptide reads, in one-letter code: Zinc finger protein 572 (529 aa).

The interval 1-62 (MEQEKKLLVS…EWSKRHRPQH (62 aa)) is disordered. Glycyl lysine isopeptide (Lys-Gly) (interchain with G-Cter in SUMO2) cross-links involve residues Lys5 and Lys6. Residues 26 to 35 (TGDTSMNNLE) show a composition bias toward polar residues. The span at 36 to 55 (TVHHNNSKADKLKEKPSEWS) shows a compositional bias: basic and acidic residues. 12 consecutive C2H2-type zinc fingers follow at residues 132 to 154 (YKCS…QRTH), 160 to 182 (YKCS…LRMH), 188 to 210 (YQCG…ERTH), 216 to 238 (YKCP…HRSH), 244 to 266 (YECS…QRTH), 272 to 294 (YKCP…QRTH), 300 to 322 (YKCL…QRIH), 328 to 350 (YQCP…QKMH), 384 to 406 (YRCC…QRTH), 412 to 434 (YRCS…QRTH), 440 to 462 (YKCP…RRTH), and 468 to 490 (YKCT…RKIH).

This sequence belongs to the krueppel C2H2-type zinc-finger protein family.

The protein localises to the nucleus. In terms of biological role, may be involved in transcriptional regulation. The polypeptide is Zinc finger protein 572 (ZNF572) (Homo sapiens (Human)).